A 131-amino-acid polypeptide reads, in one-letter code: Large ribosomal subunit protein bL17 (131 aa).

It belongs to the bacterial ribosomal protein bL17 family. In terms of assembly, part of the 50S ribosomal subunit. Contacts protein L32.

This chain is Large ribosomal subunit protein bL17, found in Hamiltonella defensa subsp. Acyrthosiphon pisum (strain 5AT).